Consider the following 369-residue polypeptide: Extracellular signal-regulated kinase 2 (369 aa).

Positions 14–304 constitute a Protein kinase domain; the sequence is YEVLQKIGKG…AEEALAHPFV (291 aa). ATP-binding positions include 20-28 and K43; that span reads IGKGAYGIV. The active-site Proton acceptor is the D137. T176 bears the Phosphothreonine mark. The TXY motif lies at 176–178; it reads TEY. At Y178 the chain carries Phosphotyrosine. Residues 346-369 are disordered; the sequence is KKKEERKKQTNPTKPDTTAPTLST. The segment covering 355–369 has biased composition (polar residues); it reads TNPTKPDTTAPTLST.

The protein belongs to the protein kinase superfamily. CMGC Ser/Thr protein kinase family. MAP kinase subfamily. Requires Mg(2+) as cofactor. Post-translationally, dually phosphorylated on Thr-176 and Tyr-178, which activates the enzyme.

It carries out the reaction L-seryl-[protein] + ATP = O-phospho-L-seryl-[protein] + ADP + H(+). It catalyses the reaction L-threonyl-[protein] + ATP = O-phospho-L-threonyl-[protein] + ADP + H(+). With respect to regulation, activated by tyrosine and threonine phosphorylation. Functionally, implicated in the relay of the cAMP chemotactic signal and cell differentiation. Important for receptor-mediated activation of adenylyl cyclase. The polypeptide is Extracellular signal-regulated kinase 2 (erkB) (Dictyostelium discoideum (Social amoeba)).